A 207-amino-acid polypeptide reads, in one-letter code: Superoxide dismutase [Mn] (207 aa).

Residues His-28, His-76, Asp-160, and His-164 each coordinate Mn(2+).

The protein belongs to the iron/manganese superoxide dismutase family. Mn(2+) serves as cofactor.

The catalysed reaction is 2 superoxide + 2 H(+) = H2O2 + O2. In terms of biological role, destroys superoxide anion radicals which are normally produced within the cells and which are toxic to biological systems. The polypeptide is Superoxide dismutase [Mn] (sodA) (Mycobacterium intracellulare (strain ATCC 13950 / DSM 43223 / JCM 6384 / NCTC 13025 / 3600)).